A 254-amino-acid polypeptide reads, in one-letter code: Type III pantothenate kinase (254 aa).

Residue 6-13 (DLGNSAIK) participates in ATP binding. Substrate is bound by residues Y99 and 106-109 (GVDR). D108 acts as the Proton acceptor in catalysis. D128 contacts K(+). T131 lines the ATP pocket. T182 is a substrate binding site.

Belongs to the type III pantothenate kinase family. As to quaternary structure, homodimer. NH4(+) serves as cofactor. K(+) is required as a cofactor.

It is found in the cytoplasm. It carries out the reaction (R)-pantothenate + ATP = (R)-4'-phosphopantothenate + ADP + H(+). It participates in cofactor biosynthesis; coenzyme A biosynthesis; CoA from (R)-pantothenate: step 1/5. In terms of biological role, catalyzes the phosphorylation of pantothenate (Pan), the first step in CoA biosynthesis. The sequence is that of Type III pantothenate kinase from Halorhodospira halophila (strain DSM 244 / SL1) (Ectothiorhodospira halophila (strain DSM 244 / SL1)).